Reading from the N-terminus, the 60-residue chain is Large ribosomal subunit protein bL32 (60 aa).

Belongs to the bacterial ribosomal protein bL32 family.

The sequence is that of Large ribosomal subunit protein bL32 from Ehrlichia ruminantium (strain Gardel).